Reading from the N-terminus, the 964-residue chain is MASTTVAQLAGELNRSASALLEQLQAAGVQKATPEDVITESDKTRLLDYLKRAHGSAEDGARKKITITKRETSEIRQADATGKTRTVQVEVKKKRVLVKRDEPNAALAESEASEAAPVVDAEEVARREEEHRRQAELLARQEAELKARQEAMEREEAERRARQEAAEAEQKRQAELAAKKAEEEAVAARAAAEASDEAPRRKAEEDAARLATEREAAQKAADEARVAADKIKAEEDAARKRREAAEAEARAIREMMSAPARVLKTPAERKAEEVKKAEQSGTLHKPVKPAGEARPAAAKKPAAPAPAAAPAPGSPAGDKKGGRGKSGWQDDNRGGKRGGLKTRGDTGGGADGWRSGSKGGRNRHGDDNRNAFQAPTEPVVREVHVPETISVADLAHKMSVKAAEVIKQMMKLGQMVTINQVLDQETAMIVVEEMGHQAVAAKLDDPEAMLVGDVQEQTNAEAETRPPVVTVMGHVDHGKTSLLDYIRRAKVAAGEAGGITQHIGAYHVETDRGVITFLDTPGHEAFTAMRARGAKATDIVILVVAADDGVMPQTKEAIAHAKAAGVPIVVAITKVDKPEANPDRVKQELVAESVIPEEYGGDVPFVPVSAKTGEGIDSLLENVLLQAEVLELKAPVNAPAKGLVVEAQLDKGKGPIATVLVQSGTLKRGDVVLAGTAYGRVRAMLDENGKPAKDAGPSIPVEIQGLSEVPGAGEEVLVLPDERKAREIALFRQGKFRDVKLARQQAAKLENMLEQMSEGDVKSLPLIIKADVQGSQEALVHSLKKLSTDEVRVQIVHAAVGGITESDVNLATASKAVIIGFNTRADAGARKLAENHGIDIRYYNIIYDAVDEVKAAMSGMLSPEKREETTGLVEVRQVFHVPKVGAVAGCMVLDGFVKRNSLVRVLRANVVIFSGELDSLKRFKDDVKEVKQGFECGLSIKNFNDVQEGDQLEVYEITEVARTL.

Residues 105–119 are compositionally biased toward low complexity; that stretch reads AALAESEASEAAPVV. Disordered stretches follow at residues 105–133 and 146–378; these read AALAESEASEAAPVVDAEEVARREEEHRR and KARQ…PTEP. 4 stretches are compositionally biased toward basic and acidic residues: residues 123-133, 146-183, 197-253, and 266-278; these read EVARREEEHRR, KARQEAMEREEAERRARQEAAEAEQKRQAELAAKKAEE, EAPR…RAIR, and PAERKAEEVKKAE. Residues 288–302 show a composition bias toward low complexity; the sequence is KPAGEARPAAAKKPA. A compositionally biased stretch (pro residues) spans 303–313; sequence APAPAAAPAPG. In terms of domain architecture, tr-type G spans 464–633; the sequence is TRPPVVTVMG…LLQAEVLELK (170 aa). Residues 473–480 form a G1 region; sequence GHVDHGKT. 473-480 is a binding site for GTP; it reads GHVDHGKT. Residues 498 to 502 form a G2 region; it reads GITQH. Positions 519 to 522 are G3; that stretch reads DTPG. Residues 519–523 and 573–576 contribute to the GTP site; these read DTPGH and TKVD. The segment at 573 to 576 is G4; it reads TKVD. The tract at residues 609 to 611 is G5; the sequence is SAK.

The protein belongs to the TRAFAC class translation factor GTPase superfamily. Classic translation factor GTPase family. IF-2 subfamily.

It localises to the cytoplasm. In terms of biological role, one of the essential components for the initiation of protein synthesis. Protects formylmethionyl-tRNA from spontaneous hydrolysis and promotes its binding to the 30S ribosomal subunits. Also involved in the hydrolysis of GTP during the formation of the 70S ribosomal complex. The chain is Translation initiation factor IF-2 from Ralstonia pickettii (strain 12J).